Here is a 223-residue protein sequence, read N- to C-terminus: Proteasome subunit beta (223 aa).

The propeptide at 1 to 6 (MDTMKG) is removed in mature form; by autocatalysis. Threonine 7 serves as the catalytic Nucleophile.

Belongs to the peptidase T1B family. As to quaternary structure, the 20S proteasome core is composed of 14 alpha and 14 beta subunits that assemble into four stacked heptameric rings, resulting in a barrel-shaped structure. The two inner rings, each composed of seven catalytic beta subunits, are sandwiched by two outer rings, each composed of seven alpha subunits. The catalytic chamber with the active sites is on the inside of the barrel. Has a gated structure, the ends of the cylinder being occluded by the N-termini of the alpha-subunits. Is capped at one or both ends by the proteasome regulatory ATPase, PAN.

Its subcellular location is the cytoplasm. It catalyses the reaction Cleavage of peptide bonds with very broad specificity.. With respect to regulation, the formation of the proteasomal ATPase PAN-20S proteasome complex, via the docking of the C-termini of PAN into the intersubunit pockets in the alpha-rings, triggers opening of the gate for substrate entry. Interconversion between the open-gate and close-gate conformations leads to a dynamic regulation of the 20S proteasome proteolysis activity. Component of the proteasome core, a large protease complex with broad specificity involved in protein degradation. The protein is Proteasome subunit beta of Methanocaldococcus vulcanius (strain ATCC 700851 / DSM 12094 / M7) (Methanococcus vulcanius).